Consider the following 1304-residue polypeptide: Histone-lysine N-methyltransferase met-2 (1304 aa).

Residues 1–16 (MDQQEPSNNVDTSSIL) are compositionally biased toward polar residues. Residues 1–31 (MDQQEPSNNVDTSSILSDDGMETQEQSSFVT) are disordered. Positions 97 to 129 (NESEQEAVAAQRRVDAEKTAKDEAELKQQEEAE) form a coiled coil. The MBD domain maps to 834 to 909 (FHRNSPIHTP…FSFDARIDTA (76 aa)). One can recognise a Pre-SET domain in the interval 971–1049 (SGCSCDGDCS…SCYNRVVQNN (79 aa)). Residues Cys973, Cys975, Cys979, Cys985, Cys987, Cys1030, Cys1034, Cys1036, and Cys1041 each coordinate Zn(2+). Residues 1052–1277 (YPMHIFKTAQ…AGDELTWDYQ (226 aa)) form the SET domain. S-adenosyl-L-methionine is bound by residues 1062–1064 (SGW), Asp1098, and Tyr1100. The segment covering 1113–1122 (EKGREDHETD) has biased composition (basic and acidic residues). A disordered region spans residues 1113 to 1201 (EKGREDHETD…DSMEKDNIES (89 aa)). Residues 1128 to 1144 (DESDYDDEEGSDGDSGD) are compositionally biased toward acidic residues. Over residues 1152–1165 (KRQDSSESGEETKR) the composition is skewed to basic and acidic residues. Residues 1166–1178 (LTRQKRKQSKKSG) show a composition bias toward basic residues. A compositionally biased stretch (basic and acidic residues) spans 1182 to 1201 (SVEKDDTTPRDSMEKDNIES). Residues Arg1231 and 1234–1235 (NH) contribute to the S-adenosyl-L-methionine site. Cys1237, Cys1290, Cys1292, and Cys1297 together coordinate Zn(2+). One can recognise a Post-SET domain in the interval 1286 to 1302 (TQLTCHCGAENCTGRLL).

The protein belongs to the class V-like SAM-binding methyltransferase superfamily.

The protein localises to the nucleus. The protein resides in the chromosome. Its subcellular location is the cytoplasm. The enzyme catalyses N(6)-methyl-L-lysyl(9)-[histone H3] + S-adenosyl-L-methionine = N(6),N(6)-dimethyl-L-lysyl(9)-[histone H3] + S-adenosyl-L-homocysteine + H(+). It catalyses the reaction L-lysyl(9)-[histone H3] + S-adenosyl-L-methionine = N(6)-methyl-L-lysyl(9)-[histone H3] + S-adenosyl-L-homocysteine + H(+). Its function is as follows. Histone methyltransferase which is required for the mono- and dimethylation of 'Lys-9' of histone H3. This increases the efficiency of set-25-mediated trimethylation of histone H3 'Lys-9'. Involved in the transcriptional repression of lin-3 which is required for the negative regulation of vulval cell fate specification during postembryonic development. Has a role in blocking checkpoint signaling and mediating the transcriptional silencing of meiotic sex chromosome inactivation; a mechanism which enables checkpoint proteins to distinguish between the partnerless male X chromosome and asynapsed chromosomes thereby shielding the lone X from inappropriate activation of an apoptotic program. Operates redundantly with set-25 to position chromatin at the nuclear periphery. Required for small-RNA-induced H3K9 methylation. Together with set-25, protects and stabilizes repeat-rich genomic regions by suppressing transcription-induced replication stress through methylation of H3K9. Together with spr-5, required for transgenerational fertility. In Caenorhabditis elegans, this protein is Histone-lysine N-methyltransferase met-2 (met-2).